A 215-amino-acid polypeptide reads, in one-letter code: Riboflavin synthase (215 aa).

Lumazine-binding repeat units follow at residues 1–96 (MFTG…FGGH) and 97–193 (FVSG…YRFL). 2,4-dihydroxypteridine contacts are provided by residues 4–6 (GIV), 47–49 (CLT), 61–66 (DVMPET), 100–102 (GHV), Lys135, 144–146 (SST), and 158–163 (SVIPHT).

In terms of assembly, homotrimer.

It catalyses the reaction 2 6,7-dimethyl-8-(1-D-ribityl)lumazine + H(+) = 5-amino-6-(D-ribitylamino)uracil + riboflavin. The protein operates within cofactor biosynthesis; riboflavin biosynthesis; riboflavin from 2-hydroxy-3-oxobutyl phosphate and 5-amino-6-(D-ribitylamino)uracil: step 2/2. Functionally, catalyzes the dismutation of two molecules of 6,7-dimethyl-8-ribityllumazine, resulting in the formation of riboflavin and 5-amino-6-(D-ribitylamino)uracil. This chain is Riboflavin synthase (ribE), found in Bacillus amyloliquefaciens (Bacillus velezensis).